We begin with the raw amino-acid sequence, 444 residues long: Serine--tRNA ligase (444 aa).

Residue Thr248–Glu250 coordinates L-serine. Arg279–Glu281 serves as a coordination point for ATP. Residue Glu302 participates in L-serine binding. Residue Glu366–Ser369 participates in ATP binding. An L-serine-binding site is contributed by Ser401.

Belongs to the class-II aminoacyl-tRNA synthetase family. Type-1 seryl-tRNA synthetase subfamily. As to quaternary structure, homodimer. The tRNA molecule binds across the dimer.

It is found in the cytoplasm. It catalyses the reaction tRNA(Ser) + L-serine + ATP = L-seryl-tRNA(Ser) + AMP + diphosphate + H(+). The enzyme catalyses tRNA(Sec) + L-serine + ATP = L-seryl-tRNA(Sec) + AMP + diphosphate + H(+). The protein operates within aminoacyl-tRNA biosynthesis; selenocysteinyl-tRNA(Sec) biosynthesis; L-seryl-tRNA(Sec) from L-serine and tRNA(Sec): step 1/1. Catalyzes the attachment of serine to tRNA(Ser). Is also able to aminoacylate tRNA(Sec) with serine, to form the misacylated tRNA L-seryl-tRNA(Sec), which will be further converted into selenocysteinyl-tRNA(Sec). This chain is Serine--tRNA ligase, found in Polaromonas naphthalenivorans (strain CJ2).